Reading from the N-terminus, the 122-residue chain is Ribonuclease P protein component (122 aa).

This sequence belongs to the RnpA family. In terms of assembly, consists of a catalytic RNA component (M1 or rnpB) and a protein subunit.

The catalysed reaction is Endonucleolytic cleavage of RNA, removing 5'-extranucleotides from tRNA precursor.. RNaseP catalyzes the removal of the 5'-leader sequence from pre-tRNA to produce the mature 5'-terminus. It can also cleave other RNA substrates such as 4.5S RNA. The protein component plays an auxiliary but essential role in vivo by binding to the 5'-leader sequence and broadening the substrate specificity of the ribozyme. This Halorhodospira halophila (strain DSM 244 / SL1) (Ectothiorhodospira halophila (strain DSM 244 / SL1)) protein is Ribonuclease P protein component.